We begin with the raw amino-acid sequence, 121 residues long: Large ribosomal subunit protein bL12 (121 aa).

This sequence belongs to the bacterial ribosomal protein bL12 family. As to quaternary structure, homodimer. Part of the ribosomal stalk of the 50S ribosomal subunit. Forms a multimeric L10(L12)X complex, where L10 forms an elongated spine to which 2 to 4 L12 dimers bind in a sequential fashion. Binds GTP-bound translation factors.

Its function is as follows. Forms part of the ribosomal stalk which helps the ribosome interact with GTP-bound translation factors. Is thus essential for accurate translation. This Tolumonas auensis (strain DSM 9187 / NBRC 110442 / TA 4) protein is Large ribosomal subunit protein bL12.